The primary structure comprises 334 residues: Glycerol-3-phosphate dehydrogenase [NAD(P)+] (334 aa).

Tryptophan 13, arginine 33, and lysine 106 together coordinate NADPH. Sn-glycerol 3-phosphate contacts are provided by lysine 106, glycine 137, and serine 139. Alanine 141 is an NADPH binding site. The sn-glycerol 3-phosphate site is built by lysine 192, aspartate 245, serine 255, arginine 256, and asparagine 257. Lysine 192 serves as the catalytic Proton acceptor. Arginine 256 lines the NADPH pocket. NADPH contacts are provided by valine 280 and glutamate 282.

It belongs to the NAD-dependent glycerol-3-phosphate dehydrogenase family.

The protein resides in the cytoplasm. It carries out the reaction sn-glycerol 3-phosphate + NAD(+) = dihydroxyacetone phosphate + NADH + H(+). It catalyses the reaction sn-glycerol 3-phosphate + NADP(+) = dihydroxyacetone phosphate + NADPH + H(+). It functions in the pathway membrane lipid metabolism; glycerophospholipid metabolism. Its function is as follows. Catalyzes the reduction of the glycolytic intermediate dihydroxyacetone phosphate (DHAP) to sn-glycerol 3-phosphate (G3P), the key precursor for phospholipid synthesis. The polypeptide is Glycerol-3-phosphate dehydrogenase [NAD(P)+] (Chlamydia muridarum (strain MoPn / Nigg)).